The chain runs to 232 residues: uncharacterized protein (232 aa).

This is an uncharacterized protein from Escherichia coli (strain K12).